Consider the following 232-residue polypeptide: MDRQQQLRRLQGGLIVSCQAPADSPLHQPEIIAAIAVAAVQRGAVGIRLDTPEHVRAVRDRLPETPIIGLWKRTFPDSSVYITPRYVEAEAIAAAGADIVALDCTLRPRPDGEDFCQIIPRLQQELGCAVMADIDTLEAAIAAAKAGADLVGTTLYGYTEATQGQTPPGWDLLETAAQQLPNTPVICEGGIASAQAARQACDRGAFAVVVGTAITGIDLQVQAYVTALNARP.

This sequence belongs to the NanE family.

It carries out the reaction an N-acyl-D-glucosamine 6-phosphate = an N-acyl-D-mannosamine 6-phosphate. It participates in amino-sugar metabolism; N-acetylneuraminate degradation; D-fructose 6-phosphate from N-acetylneuraminate: step 3/5. Converts N-acetylmannosamine-6-phosphate (ManNAc-6-P) to N-acetylglucosamine-6-phosphate (GlcNAc-6-P). In Synechococcus elongatus (strain ATCC 33912 / PCC 7942 / FACHB-805) (Anacystis nidulans R2), this protein is Putative N-acetylmannosamine-6-phosphate 2-epimerase.